The primary structure comprises 654 residues: Fructose-1,6-bisphosphatase class 3 (654 aa).

The protein belongs to the FBPase class 3 family. Requires Mn(2+) as cofactor.

It carries out the reaction beta-D-fructose 1,6-bisphosphate + H2O = beta-D-fructose 6-phosphate + phosphate. It participates in carbohydrate biosynthesis; gluconeogenesis. In Staphylococcus epidermidis (strain ATCC 35984 / DSM 28319 / BCRC 17069 / CCUG 31568 / BM 3577 / RP62A), this protein is Fructose-1,6-bisphosphatase class 3.